The primary structure comprises 256 residues: MSLAVRVIPCLDVDAGRVVKGVHFENLRDAGDPVELAAEYYRQGADELTFLDVTASSSHRQTMVDVVSRTAEQIFIPLTVGGGVRTPEDVDSLLRCGADKVGVNTAAINDPTLISRVAERFGNQVLVLSVDARREQGERHTQSGFEVTTMGGRKSTGIDAIWWVKRAQELGAGEILLNSMDADGTQQGFDLEMIKAVRKEVKIPIIASGGAGKASDFPPAIEAGADAVLAASIFHYGKVTIGEVKDAIKAAGYTVR.

Catalysis depends on residues D12 and D131.

The protein belongs to the HisA/HisF family. As to quaternary structure, heterodimer of HisH and HisF.

It is found in the cytoplasm. The catalysed reaction is 5-[(5-phospho-1-deoxy-D-ribulos-1-ylimino)methylamino]-1-(5-phospho-beta-D-ribosyl)imidazole-4-carboxamide + L-glutamine = D-erythro-1-(imidazol-4-yl)glycerol 3-phosphate + 5-amino-1-(5-phospho-beta-D-ribosyl)imidazole-4-carboxamide + L-glutamate + H(+). It functions in the pathway amino-acid biosynthesis; L-histidine biosynthesis; L-histidine from 5-phospho-alpha-D-ribose 1-diphosphate: step 5/9. Its function is as follows. IGPS catalyzes the conversion of PRFAR and glutamine to IGP, AICAR and glutamate. The HisF subunit catalyzes the cyclization activity that produces IGP and AICAR from PRFAR using the ammonia provided by the HisH subunit. The sequence is that of Imidazole glycerol phosphate synthase subunit HisF from Bifidobacterium adolescentis (strain ATCC 15703 / DSM 20083 / NCTC 11814 / E194a).